Reading from the N-terminus, the 266-residue chain is Signal peptidase I (266 aa).

Residues 1 to 20 (MQTDNTKSNTNKTAKQEWGS) are Cytoplasmic-facing. A helical membrane pass occupies residues 21 to 41 (FAFVICIALLIRILIMEPFTV). The Periplasmic portion of the chain corresponds to 42–266 (PTGSMKATIL…IFRNLYNTDA (225 aa)). Catalysis depends on residues Ser45 and Lys108.

The protein belongs to the peptidase S26 family.

It is found in the cell inner membrane. It catalyses the reaction Cleavage of hydrophobic, N-terminal signal or leader sequences from secreted and periplasmic proteins.. Its function is as follows. Complements E.coli mutants temperature-sensitive for LepB function. The sequence is that of Signal peptidase I (lepB) from Rickettsia rickettsii (strain Sheila Smith).